A 308-amino-acid chain; its full sequence is tRNA pseudouridine synthase B (308 aa).

Asp44 serves as the catalytic Nucleophile.

Belongs to the pseudouridine synthase TruB family. Type 1 subfamily.

The catalysed reaction is uridine(55) in tRNA = pseudouridine(55) in tRNA. Responsible for synthesis of pseudouridine from uracil-55 in the psi GC loop of transfer RNAs. This Bdellovibrio bacteriovorus (strain ATCC 15356 / DSM 50701 / NCIMB 9529 / HD100) protein is tRNA pseudouridine synthase B.